Reading from the N-terminus, the 142-residue chain is Galactose-6-phosphate isomerase subunit LacA 2 (142 aa).

It belongs to the LacAB/RpiB family. In terms of assembly, heteromultimeric protein consisting of LacA and LacB.

The enzyme catalyses aldehydo-D-galactose 6-phosphate = keto-D-tagatose 6-phosphate. Its pathway is carbohydrate metabolism; D-galactose 6-phosphate degradation; D-tagatose 6-phosphate from D-galactose 6-phosphate: step 1/1. The sequence is that of Galactose-6-phosphate isomerase subunit LacA 2 from Streptococcus pyogenes serotype M1.